Here is a 195-residue protein sequence, read N- to C-terminus: MIEILITIILLAIVLGMDALSLAMGMGLRGVAKDYEKKFVLTVGILHVLMPLLGLNLGLVAGRFLGVWATRLGALVLVYLGWQMLSKGYAEIQPQRYNFAEAKTILAGKQQSTLDSWTSILLLGLSVSIDALTVGFTLGTLKMPILITVLIMGLIAASMSWVGFAGGRVLGRLTGSYAQILGGVVLLALAIKFVV.

A run of 6 helical transmembrane segments spans residues 4–24 (ILIT…SLAM), 39–59 (FVLT…NLGL), 64–84 (FLGV…GWQM), 120–140 (ILLL…TLGT), 145–165 (ILIT…VGFA), and 175–195 (GSYA…KFVV).

Belongs to the MntP (TC 9.B.29) family.

Its subcellular location is the cell membrane. Its function is as follows. Probably functions as a manganese efflux pump. The sequence is that of Putative manganese efflux pump MntP from Syntrophomonas wolfei subsp. wolfei (strain DSM 2245B / Goettingen).